A 200-amino-acid chain; its full sequence is TATA-box-binding protein 2 (200 aa).

A run of 2 repeats spans residues 25 to 101 (LQNI…ARIV) and 115 to 192 (IQNI…YPVL).

Belongs to the TBP family. As to quaternary structure, belongs to the TFIID complex together with the TBP-associated factors (TAFs). Binds DNA as monomer. Interacts with TAF1 (via N-terminus). Interacts with TFIIB1. Interacts with PTF2. Interacts with HAT5/ATHB-1 and ATHB-7. Component of a nuclear protein complex containing at least TATA binding proteins (TBPs, e.g. TBP1 and TBP2) and ATX1.

The protein localises to the nucleus. General transcription factor (GTF) that functions at the core of the DNA-binding multiprotein factor TFIID. Binding of TFIID to the TATA box is the initial transcriptional step of the pre-initiation complex (PIC), playing a role in the activation of eukaryotic genes transcribed by RNA polymerase II. Interacts with TFIIB1 and is required for activated transcription and possibly basal transcription. May act as GTF of RNA polymerase I-dependent transcription and rRNA synthesis. Forms a ternary complex with PBRP1 and the rDNA promoter region. In Arabidopsis thaliana (Mouse-ear cress), this protein is TATA-box-binding protein 2.